We begin with the raw amino-acid sequence, 375 residues long: Erythronate-4-phosphate dehydrogenase (375 aa).

Substrate is bound by residues Ser-45 and Thr-66. Residues Asp-146 and Thr-175 each coordinate NAD(+). Residue Arg-208 is part of the active site. Asp-232 serves as a coordination point for NAD(+). Glu-237 is a catalytic residue. His-254 serves as the catalytic Proton donor. Gly-257 contributes to the NAD(+) binding site. Tyr-258 contributes to the substrate binding site.

Belongs to the D-isomer specific 2-hydroxyacid dehydrogenase family. PdxB subfamily. Homodimer.

Its subcellular location is the cytoplasm. The enzyme catalyses 4-phospho-D-erythronate + NAD(+) = (R)-3-hydroxy-2-oxo-4-phosphooxybutanoate + NADH + H(+). Its pathway is cofactor biosynthesis; pyridoxine 5'-phosphate biosynthesis; pyridoxine 5'-phosphate from D-erythrose 4-phosphate: step 2/5. Functionally, catalyzes the oxidation of erythronate-4-phosphate to 3-hydroxy-2-oxo-4-phosphonooxybutanoate. This chain is Erythronate-4-phosphate dehydrogenase, found in Edwardsiella ictaluri (strain 93-146).